Reading from the N-terminus, the 199-residue chain is Inactive glutathione S-transferase D3 (199 aa).

The GST N-terminal domain occupies 1–64 (MVGKALGLEF…YLVEKYGKDD (64 aa)). Residues 34-36 (HSI) and 48-50 (ESR) contribute to the glutathione site. Positions 70-199 (DIQKQAVINQ…RIEEKQNAAK (130 aa)) constitute a GST C-terminal domain.

This sequence belongs to the GST superfamily. Delta family. As to quaternary structure, homodimer.

Its function is as follows. Has no glutathione S-transferase activity. This chain is Inactive glutathione S-transferase D3, found in Drosophila melanogaster (Fruit fly).